Reading from the N-terminus, the 105-residue chain is Small ribosomal subunit protein uS10 (105 aa).

This sequence belongs to the universal ribosomal protein uS10 family. Part of the 30S ribosomal subunit.

In terms of biological role, involved in the binding of tRNA to the ribosomes. In Gloeothece citriformis (strain PCC 7424) (Cyanothece sp. (strain PCC 7424)), this protein is Small ribosomal subunit protein uS10.